Reading from the N-terminus, the 312-residue chain is Malate dehydrogenase 1 (312 aa).

Residues 11–16 (GAGQIG) and aspartate 35 contribute to the NAD(+) site. Positions 86 and 92 each coordinate substrate. Residues asparagine 99 and 122–124 (ITN) contribute to the NAD(+) site. Residues asparagine 124 and arginine 155 each coordinate substrate. Histidine 179 serves as the catalytic Proton acceptor.

This sequence belongs to the LDH/MDH superfamily. MDH type 3 family.

It catalyses the reaction (S)-malate + NAD(+) = oxaloacetate + NADH + H(+). In terms of biological role, catalyzes the reversible oxidation of malate to oxaloacetate. This is Malate dehydrogenase 1 from Anaeromyxobacter dehalogenans (strain 2CP-C).